The sequence spans 100 residues: Aspartyl/glutamyl-tRNA(Asn/Gln) amidotransferase subunit C (100 aa).

The protein belongs to the GatC family. Heterotrimer of A, B and C subunits.

It catalyses the reaction L-glutamyl-tRNA(Gln) + L-glutamine + ATP + H2O = L-glutaminyl-tRNA(Gln) + L-glutamate + ADP + phosphate + H(+). The enzyme catalyses L-aspartyl-tRNA(Asn) + L-glutamine + ATP + H2O = L-asparaginyl-tRNA(Asn) + L-glutamate + ADP + phosphate + 2 H(+). Functionally, allows the formation of correctly charged Asn-tRNA(Asn) or Gln-tRNA(Gln) through the transamidation of misacylated Asp-tRNA(Asn) or Glu-tRNA(Gln) in organisms which lack either or both of asparaginyl-tRNA or glutaminyl-tRNA synthetases. The reaction takes place in the presence of glutamine and ATP through an activated phospho-Asp-tRNA(Asn) or phospho-Glu-tRNA(Gln). This Streptococcus pyogenes serotype M18 (strain MGAS8232) protein is Aspartyl/glutamyl-tRNA(Asn/Gln) amidotransferase subunit C.